The following is a 488-amino-acid chain: MLRFTNCSCKTFVKSSYKLNIRRMNSSFRTETDAFGEIHVPADKYWGAQTQRSFQNFKIGGARERMPLPLVHAFGVLKKSAAIVNESLGGLDPKISKAIQQAADEVASGKLDDHFPLVVFQTGSGTQSNMNANEVISNRAIEILGGKIGSKQVHPNNHCNQSQSSNDTFPTVMHIAASLQIQNELIPELTNLKNALEAKSKEFDHIVKIGRTHLQDATPLTLGQEFSGYVQQVENGIQRVAHSLKTLSFLAQGGTAVGTGLNTKPGFDVKIAEQISKETGLKFQTAPNKFEALAAHDAIVECSGALNTLACSLFKIAQDIRYLGSGPRCGYHELMLPENEPGSSIMPGKVNPTQNEALTQVCVQVMGNNAAITFAGSQGQFELNVFKPVMIANLLNSIRLITDAAYSFRVHCVEGIKANEPRIHELLTKSLMLVTALNPKIGYDAASKVAKNAHKKGITLKESALELGVLTEKEFDEWVVPEHMLGPK.

The transit peptide at 1 to 24 (MLRFTNCSCKTFVKSSYKLNIRRM) directs the protein to the mitochondrion. Residues 124–126 (SGT), 154–157 (HPNN), 164–166 (SSN), and Thr212 contribute to the substrate site. Catalysis depends on His213, which acts as the Proton donor/acceptor. Ser343 is a catalytic residue. Residues Ser344 and 349–351 (KVN) contribute to the substrate site. At Thr428 the chain carries Phosphothreonine.

It belongs to the class-II fumarase/aspartase family. Fumarase subfamily. Homotetramer.

Its subcellular location is the mitochondrion matrix. The protein localises to the cytoplasm. The protein resides in the nucleus. The enzyme catalyses (S)-malate = fumarate + H2O. Its pathway is carbohydrate metabolism; tricarboxylic acid cycle; (S)-malate from fumarate: step 1/1. Functionally, catalyzes the reversible stereospecific interconversion of fumarate to L-malate. In mitochondrion, catalyzes the hydration of fumarate to L-malate in the tricarboxylic acid (TCA) cycle to facilitate a transition step in the production of energy in the form of NADH. In cytoplasm and nucleus, involved in DNA repair in response to DNA damage: following DNA double-strand breaks (DSBs), translocates from the cytosol to the nucleus and promotes DNA repair by catalyzing the dehydration of L-malate to fumarate. The sequence is that of Fumarate hydratase, mitochondrial from Saccharomyces cerevisiae (strain ATCC 204508 / S288c) (Baker's yeast).